The sequence spans 386 residues: MRKEFLFTSESVTEGHPDKMADQISDAILDYIIERDPKARVACETLLSNGFCVIAGELKTTTYAPMQEIAREVIREIGYTDALYGFDYRSAGILNGVGEQSPDINQGVDREDGEIGAGDQGLMFGYACRETETLMPLPIFLSHKITEGLAKARKDGTLPFLRPDGKSQVTVRYVDGKPVGIDTIVVSTQHAPDVSQERLRDAVIEEIVYKVLPKEYLGDDIRFFVNPTGKFVIGGPQGDAGLTGRKIIVDSYGGSCPHGGGAFSGKDPSKVDRSGAYAARYVAKNLVASGVCDKATIQIAYAIGVVEPVSILVDTHGTGKVEDDQLETCVRQLFRLTPKGIIESLDLLRPIYKKTASYGHFGRELPEFSWEKTDKAELIKNYFNLK.

His-16 is an ATP binding site. Asp-18 contributes to the Mg(2+) binding site. Glu-44 is a K(+) binding site. The L-methionine site is built by Glu-57 and Gln-100. A flexible loop region spans residues 100–110 (QSPDINQGVDR). ATP-binding positions include 164–166 (DGK), 230–231 (KF), Asp-239, 245–246 (RK), Ala-262, and Lys-266. Asp-239 provides a ligand contact to L-methionine. Lys-270 contributes to the L-methionine binding site.

It belongs to the AdoMet synthase family. As to quaternary structure, homotetramer; dimer of dimers. The cofactor is Mg(2+). It depends on K(+) as a cofactor.

It localises to the cytoplasm. It carries out the reaction L-methionine + ATP + H2O = S-adenosyl-L-methionine + phosphate + diphosphate. It functions in the pathway amino-acid biosynthesis; S-adenosyl-L-methionine biosynthesis; S-adenosyl-L-methionine from L-methionine: step 1/1. Its function is as follows. Catalyzes the formation of S-adenosylmethionine (AdoMet) from methionine and ATP. The overall synthetic reaction is composed of two sequential steps, AdoMet formation and the subsequent tripolyphosphate hydrolysis which occurs prior to release of AdoMet from the enzyme. In Wolinella succinogenes (strain ATCC 29543 / DSM 1740 / CCUG 13145 / JCM 31913 / LMG 7466 / NCTC 11488 / FDC 602W) (Vibrio succinogenes), this protein is S-adenosylmethionine synthase.